The chain runs to 214 residues: ATP-dependent Clp protease proteolytic subunit 3 (214 aa).

S106 functions as the Nucleophile in the catalytic mechanism. Residue H131 is part of the active site.

This sequence belongs to the peptidase S14 family. In terms of assembly, fourteen ClpP subunits assemble into 2 heptameric rings which stack back to back to give a disk-like structure with a central cavity, resembling the structure of eukaryotic proteasomes.

The protein resides in the cytoplasm. It catalyses the reaction Hydrolysis of proteins to small peptides in the presence of ATP and magnesium. alpha-casein is the usual test substrate. In the absence of ATP, only oligopeptides shorter than five residues are hydrolyzed (such as succinyl-Leu-Tyr-|-NHMec, and Leu-Tyr-Leu-|-Tyr-Trp, in which cleavage of the -Tyr-|-Leu- and -Tyr-|-Trp bonds also occurs).. Functionally, cleaves peptides in various proteins in a process that requires ATP hydrolysis. Has a chymotrypsin-like activity. Plays a major role in the degradation of misfolded proteins. In Trichormus variabilis (strain ATCC 29413 / PCC 7937) (Anabaena variabilis), this protein is ATP-dependent Clp protease proteolytic subunit 3.